The primary structure comprises 273 residues: Peroxiredoxin-4 (273 aa).

A signal peptide spans 1–40; it reads METWSKLLDGTTPSRRWRKLVLLLPPLLLFLLQTEALQGL. The Thioredoxin domain occupies 81 to 239; that stretch reads AKISKPAPYW…TLRLVQAFQY (159 aa). Cys-126 serves as the catalytic Cysteine sulfenic acid (-SOH) intermediate.

Belongs to the peroxiredoxin family. AhpC/Prx1 subfamily. In terms of assembly, homodimer; disulfide-linked, upon oxidation. 5 homodimers assemble to form a ring-like decamer. The enzyme can be inactivated by further oxidation of the cysteine sulfenic acid (C(P)-SOH) to sulphinic acid (C(P)-SO2H) and sulphonic acid (C(P)-SO3H) instead of its condensation to a disulfide bond.

Its subcellular location is the cytoplasm. The protein localises to the endoplasmic reticulum. The protein resides in the secreted. The enzyme catalyses a hydroperoxide + [thioredoxin]-dithiol = an alcohol + [thioredoxin]-disulfide + H2O. Functionally, thiol-specific peroxidase that catalyzes the reduction of hydrogen peroxide and organic hydroperoxides to water and alcohols, respectively. Plays a role in cell protection against oxidative stress by detoxifying peroxides and as sensor of hydrogen peroxide-mediated signaling events. Regulates the activation of NF-kappa-B in the cytosol by a modulation of I-kappa-B-alpha phosphorylation. The polypeptide is Peroxiredoxin-4 (Prdx4) (Rattus norvegicus (Rat)).